Here is a 291-residue protein sequence, read N- to C-terminus: Putative phosphatase MG263 (291 aa).

Asp-11 (nucleophile) is an active-site residue. A Mg(2+)-binding site is contributed by Asp-11. Position 12 (Leu-12) interacts with phosphate. Mg(2+) is bound at residue Asp-13. Residues 60-61 (TG) and Lys-217 each bind phosphate. Residue Asp-241 coordinates Mg(2+). Asn-244 provides a ligand contact to phosphate.

The protein belongs to the HAD-like hydrolase superfamily. Cof family. The cofactor is Mg(2+).

This Mycoplasma genitalium (strain ATCC 33530 / DSM 19775 / NCTC 10195 / G37) (Mycoplasmoides genitalium) protein is Putative phosphatase MG263.